The following is a 191-amino-acid chain: Signal peptidase complex catalytic subunit sec11 (191 aa).

At 1–14 (MLSFLSSNISNARQ) the chain is on the cytoplasmic side. A helical; Signal-anchor for type II membrane protein transmembrane segment spans residues 15-33 (TLAQVLNFALVLSSAFMMW). Over 34–191 (KGLSVFTGSS…MGVMVMLQRE (158 aa)) the chain is Lumenal. Catalysis depends on charge relay system residues Ser53, His92, and Asp133. The segment at 177-188 (VLLGIMGVMVML) is C-terminal short (CTS) helix.

It belongs to the peptidase S26B family. Component of the signal peptidase complex (SPC) composed of a catalytic subunit SEC11 and three accessory subunits SPC1, SPC2 and SPC3. The complex induces a local thinning of the ER membrane which is used to measure the length of the signal peptide (SP) h-region of protein substrates. This ensures the selectivity of the complex towards h-regions shorter than 18-20 amino acids. SPC associates with the translocon complex.

Its subcellular location is the endoplasmic reticulum membrane. The enzyme catalyses Cleavage of hydrophobic, N-terminal signal or leader sequences from secreted and periplasmic proteins.. In terms of biological role, catalytic component of the signal peptidase complex (SPC) which catalyzes the cleavage of N-terminal signal sequences from nascent proteins as they are translocated into the lumen of the endoplasmic reticulum. Specifically cleaves N-terminal signal peptides that contain a hydrophobic alpha-helix (h-region) shorter than 18-20 amino acids. The sequence is that of Signal peptidase complex catalytic subunit sec11 (sec11) from Aspergillus terreus (strain NIH 2624 / FGSC A1156).